A 290-amino-acid polypeptide reads, in one-letter code: ATP synthase gamma chain (290 aa).

This sequence belongs to the ATPase gamma chain family. As to quaternary structure, F-type ATPases have 2 components, CF(1) - the catalytic core - and CF(0) - the membrane proton channel. CF(1) has five subunits: alpha(3), beta(3), gamma(1), delta(1), epsilon(1). CF(0) has three main subunits: a, b and c.

It is found in the cell inner membrane. Functionally, produces ATP from ADP in the presence of a proton gradient across the membrane. The gamma chain is believed to be important in regulating ATPase activity and the flow of protons through the CF(0) complex. The sequence is that of ATP synthase gamma chain from Thiobacillus denitrificans (strain ATCC 25259 / T1).